A 370-amino-acid chain; its full sequence is MPPLSLLIKPASSGCNLKCTYCFYHSLSDNRNVKSYGIMRDEVLESMVKRVLNEANGHCSFAFQGGEPTLAGLEFFEKLMELQRKHNYKNLKIYNSLQTNGTLIDESWAKFLSENKFLVGLSMDGPKEIHNLNRKDCCGLDTFSKVERAAELFKKYKVEFNILCVVTSNTARHVNKVYKYFKEKDFKFLQFINCLDPLYEEKGKYNYSLKPKDYTKFLKNLFDFWYEDFLNGNRVSIRYFDGLLETILLGKSSSCGMNGTCTCQFVVESDGSVYPCDFYVLDKWRLGNIQDMTMKELFETNKNHEFIKLSFKVHEECKKCKWFRLCKGGCRRCRDSKEDSALELNYYCQSYKEFFEYAFPRLINVANNIK.

Residues 1–227 (MPPLSLLIKP…LKNLFDFWYE (227 aa)) enclose the Radical SAM core domain. 2 residues coordinate [4Fe-4S] cluster: Cys-15 and Cys-19. Tyr-21 is an S-adenosyl-L-methionine binding site. Residue Cys-22 coordinates [4Fe-4S] cluster. The S-adenosyl-L-methionine site is built by Gly-66, Ser-122, Arg-134, and Leu-195. Residues Cys-255, Cys-261, and Cys-276 each contribute to the [4Fe-4S] cluster site. Asp-277 functions as the Proton acceptor in the catalytic mechanism. 5 residues coordinate [4Fe-4S] cluster: Cys-317, Cys-320, Cys-326, Cys-330, and Cys-348.

It belongs to the radical SAM superfamily. Anaerobic sulfatase-maturating enzyme family. As to quaternary structure, monomer. [4Fe-4S] cluster serves as cofactor.

It carries out the reaction L-cysteinyl-[sulfatase] + S-adenosyl-L-methionine + H2O = 3-oxo-L-alanyl-[sulfatase] + hydrogen sulfide + 5'-deoxyadenosine + L-methionine + 2 H(+). Its pathway is protein modification; sulfatase oxidation. Its function is as follows. Involved in 'Cys-type' sulfatase maturation under anaerobic conditions. Catalyzes the post-translational modification of cysteine ('Cys-51' in the arylsulfatase CPF_0221) into 3-oxoalanine (also known as C(alpha)-formylglycine (FGly)), by a free radical chemical mechanism initiated via the reductive cleavage of S-adenosyl-L-methionine (SAM). Is also able to oxidize a serine residue in a synthetic substrate to FGly in vitro, and in a serine variant of a Cys-type sulfatase in vivo, but this activity is not physiological. Converts threonyl peptides to the corresponding ketone product, and also allo-threonyl peptides, but with a significantly reduced efficiency. The polypeptide is Cysteine-type anaerobic sulfatase-maturating enzyme (Clostridium perfringens (strain ATCC 13124 / DSM 756 / JCM 1290 / NCIMB 6125 / NCTC 8237 / Type A)).